The following is a 189-amino-acid chain: Mediator of RNA polymerase II transcription subunit 10b (189 aa).

Residues 1–22 (MDPTQNTSAGIGGSNGTIRYQT) are disordered.

It belongs to the Mediator complex subunit 10 family. In terms of assembly, component of the Mediator complex.

The protein localises to the nucleus. Its function is as follows. Component of the Mediator complex, a coactivator involved in the regulated transcription of nearly all RNA polymerase II-dependent genes. Mediator functions as a bridge to convey information from gene-specific regulatory proteins to the basal RNA polymerase II transcription machinery. The Mediator complex, having a compact conformation in its free form, is recruited to promoters by direct interactions with regulatory proteins and serves for the assembly of a functional preinitiation complex with RNA polymerase II and the general transcription factors. This chain is Mediator of RNA polymerase II transcription subunit 10b (MED10B), found in Arabidopsis thaliana (Mouse-ear cress).